The following is a 387-amino-acid chain: Succinate--CoA ligase [ADP-forming] subunit beta (387 aa).

Residues lysine 46, 53–55 (GRG), glutamate 99, alanine 102, and glutamate 107 contribute to the ATP site. Asparagine 199 and aspartate 213 together coordinate Mg(2+). Residues asparagine 264 and 321 to 323 (GIV) each bind substrate.

Belongs to the succinate/malate CoA ligase beta subunit family. As to quaternary structure, heterotetramer of two alpha and two beta subunits. The cofactor is Mg(2+).

It catalyses the reaction succinate + ATP + CoA = succinyl-CoA + ADP + phosphate. The enzyme catalyses GTP + succinate + CoA = succinyl-CoA + GDP + phosphate. It functions in the pathway carbohydrate metabolism; tricarboxylic acid cycle; succinate from succinyl-CoA (ligase route): step 1/1. In terms of biological role, succinyl-CoA synthetase functions in the citric acid cycle (TCA), coupling the hydrolysis of succinyl-CoA to the synthesis of either ATP or GTP and thus represents the only step of substrate-level phosphorylation in the TCA. The beta subunit provides nucleotide specificity of the enzyme and binds the substrate succinate, while the binding sites for coenzyme A and phosphate are found in the alpha subunit. The polypeptide is Succinate--CoA ligase [ADP-forming] subunit beta (Campylobacter jejuni (strain RM1221)).